Consider the following 130-residue polypeptide: MEEITDGVNNMNLATDSQKKNRIQVSNTKKPLFFYVNLAKRYMQQYNDVELSALGMAIATVVTVTEILKNNGFAVEKKIMTSTVDIKDDARGRPVQKAKIEITLVKSEKFDELMAAANEEKEDAEAQVQN.

Residue Met1 is modified to N-acetylmethionine.

As to quaternary structure, homotetramer.

This is an uncharacterized protein from Arabidopsis thaliana (Mouse-ear cress).